The primary structure comprises 557 residues: MNYNDTTEFCFPFGQPSFPTSAMTEGSFDGQFSEFDPTFTSPADTALSDIANLPIDLHKDALFANAPGKGDVDFDSVSMLQLLSDYPLAFNSTENNQKLQTNPSARWSLLDSMDFDNQRQCSDLESAQLGDSGLLKSTILSNSHIDIAALSSSKTSEPTPPFSYVQTPCIPTPSSALIDTPFPGALDSEFGFDESQAPLFPASDGDCQRAFASISYPTNYGCKLSNLGFMSPQSPVKRELNDSTSPSKLSESSSSLTGSSSALLSQSEFLGSVPSLSDSIATVDPFFSFESFETDEKARSLLMDASLKLPQFSTPNLSSNSSSLSLKSTLAEGMKGSTPLAAVKTEKASKAARVMKQKKHREHVCFNCGVTETPLWRRTSDKLNFLCNACGLYNKQYGVMRPLSPRNKGSSKALENLVCANCSSTKTSLWRKDRHGQTVCNACGLYARLHGHNRPIGLKKNKITRRRRGKGPGGEDGMSDEVKSEFPVLSKSVTMAEILSSKGLESPQLTNSVSVSKMPNTDADVSLEHAKISFDSLDNSVIVKKEEEIENKFSVSC.

A disordered region spans residues 234–258; that stretch reads SPVKRELNDSTSPSKLSESSSSLTG. The span at 243–258 shows a compositional bias: low complexity; the sequence is STSPSKLSESSSSLTG. 2 consecutive GATA-type zinc fingers follow at residues 365 to 390 and 419 to 443; these read CFNC…CNAC and CANC…CNAC.

Its subcellular location is the nucleus. It localises to the cytoplasm. Its function is as follows. Activates genes required for amino acid biosynthesis and acts as a master transcriptional regulator during amino acid starvation. Binds variations of the DNA sequence 5'-GAT[AC]GC-3'. This chain is Transcription factor fil1, found in Schizosaccharomyces pombe (strain 972 / ATCC 24843) (Fission yeast).